The primary structure comprises 188 residues: Elongation factor P (188 aa).

The protein belongs to the elongation factor P family.

The protein resides in the cytoplasm. It functions in the pathway protein biosynthesis; polypeptide chain elongation. In terms of biological role, involved in peptide bond synthesis. Stimulates efficient translation and peptide-bond synthesis on native or reconstituted 70S ribosomes in vitro. Probably functions indirectly by altering the affinity of the ribosome for aminoacyl-tRNA, thus increasing their reactivity as acceptors for peptidyl transferase. This Chlorobium phaeobacteroides (strain DSM 266 / SMG 266 / 2430) protein is Elongation factor P.